The chain runs to 150 residues: SsrA-binding protein (150 aa).

Belongs to the SmpB family.

Its subcellular location is the cytoplasm. In terms of biological role, required for rescue of stalled ribosomes mediated by trans-translation. Binds to transfer-messenger RNA (tmRNA), required for stable association of tmRNA with ribosomes. tmRNA and SmpB together mimic tRNA shape, replacing the anticodon stem-loop with SmpB. tmRNA is encoded by the ssrA gene; the 2 termini fold to resemble tRNA(Ala) and it encodes a 'tag peptide', a short internal open reading frame. During trans-translation Ala-aminoacylated tmRNA acts like a tRNA, entering the A-site of stalled ribosomes, displacing the stalled mRNA. The ribosome then switches to translate the ORF on the tmRNA; the nascent peptide is terminated with the 'tag peptide' encoded by the tmRNA and targeted for degradation. The ribosome is freed to recommence translation, which seems to be the essential function of trans-translation. The protein is SsrA-binding protein of Polynucleobacter asymbioticus (strain DSM 18221 / CIP 109841 / QLW-P1DMWA-1) (Polynucleobacter necessarius subsp. asymbioticus).